We begin with the raw amino-acid sequence, 237 residues long: Ribosomal RNA small subunit methyltransferase G (237 aa).

Residues Gly-78, Phe-83, 129–130, and Arg-148 each bind S-adenosyl-L-methionine; that span reads AE.

It belongs to the methyltransferase superfamily. RNA methyltransferase RsmG family.

It localises to the cytoplasm. Specifically methylates the N7 position of a guanine in 16S rRNA. This Streptococcus pyogenes serotype M12 (strain MGAS9429) protein is Ribosomal RNA small subunit methyltransferase G.